A 130-amino-acid chain; its full sequence is Protein NrdI (130 aa).

Belongs to the NrdI family.

Its function is as follows. Probably involved in ribonucleotide reductase function. This Bartonella bacilliformis (strain ATCC 35685 / KC583 / Herrer 020/F12,63) protein is Protein NrdI.